Reading from the N-terminus, the 422-residue chain is L-2-hydroxyglutarate dehydrogenase (422 aa).

Belongs to the L2HGDH family. FAD serves as cofactor.

It localises to the cell inner membrane. It catalyses the reaction (S)-2-hydroxyglutarate + a quinone = a quinol + 2-oxoglutarate. Its pathway is amino-acid degradation. Its function is as follows. Catalyzes the dehydrogenation of L-2-hydroxyglutarate (L2HG) to alpha-ketoglutarate and couples to the respiratory chain by feeding electrons from the reaction into the membrane quinone pool. Functions in a L-lysine degradation pathway that proceeds via cadaverine, glutarate and L-2-hydroxyglutarate. Also displays some oxidase activity in vitro on L-2-hydroxyglutarate with O2 as the electron acceptor, but this activity is most likely not physiological. In Salmonella houtenae, this protein is L-2-hydroxyglutarate dehydrogenase.